A 631-amino-acid polypeptide reads, in one-letter code: Chaperone protein DnaK (631 aa).

Threonine 197 bears the Phosphothreonine; by autocatalysis mark. Residues 598–631 (MYKKEQGQTGGTEQGGTEQKKSGGDDDVIDAEVE) form a disordered region. Over residues 622–631 (DDDVIDAEVE) the composition is skewed to acidic residues.

The protein belongs to the heat shock protein 70 family.

Functionally, acts as a chaperone. This Nitratiruptor sp. (strain SB155-2) protein is Chaperone protein DnaK.